The chain runs to 392 residues: Galactokinase (392 aa).

Positions 37, 43, 44, and 46 each coordinate alpha-D-galactose. Residues G136, G138, S140, and S141 each coordinate ATP. D186 lines the alpha-D-galactose pocket. The active-site Proton acceptor is D186. S230 carries the post-translational modification Phosphoserine. Y236 serves as a coordination point for alpha-D-galactose.

Belongs to the GHMP kinase family. GalK subfamily. In terms of assembly, homodimer.

The catalysed reaction is alpha-D-galactose + ATP = alpha-D-galactose 1-phosphate + ADP + H(+). The protein operates within carbohydrate metabolism; galactose metabolism. Functionally, catalyzes the transfer of a phosphate from ATP to alpha-D-galactose and participates in the first committed step in the catabolism of galactose. This is Galactokinase (Galk1) from Mus musculus (Mouse).